The chain runs to 219 residues: MSETAPAAAPDAPAPGAKAAAKKPKKAAGGAKARKPAGPSVTELITKAVSASKERKGLSLAALKKALAAGGYDVEKNNSRIKLGLKSLVSKGTLVQTKGTGASGSFRLNKKPGEVKEKAPRKRATAAKPKKPAAKKPAAAAKKPKKAAAVKKSPKKAKKPAAAATKKAAKSPKKAAKAGRPKKAAKSPAKAKAVKPKAAKPKATKPKAAKAKKTAAKKK.

Composition is skewed to low complexity over residues Met1–Ala19 and Ala27–Pro39. 2 disordered regions span residues Met1 to Ser40 and Leu94 to Lys219. Ser2 is modified (N-acetylserine). The 74-residue stretch at Ala37–Lys110 folds into the H15 domain. Basic residues-rich tracts occupy residues Ala119–Ala134, Lys142–Lys159, Lys167–Ala185, and Lys192–Lys219.

The protein belongs to the histone H1/H5 family.

Its subcellular location is the nucleus. The protein resides in the chromosome. Histones H1 are necessary for the condensation of nucleosome chains into higher-order structures. The protein is Histone H1.01 of Gallus gallus (Chicken).